Reading from the N-terminus, the 80-residue chain is Exodeoxyribonuclease 7 small subunit (80 aa).

This sequence belongs to the XseB family. As to quaternary structure, heterooligomer composed of large and small subunits.

Its subcellular location is the cytoplasm. It carries out the reaction Exonucleolytic cleavage in either 5'- to 3'- or 3'- to 5'-direction to yield nucleoside 5'-phosphates.. In terms of biological role, bidirectionally degrades single-stranded DNA into large acid-insoluble oligonucleotides, which are then degraded further into small acid-soluble oligonucleotides. The polypeptide is Exodeoxyribonuclease 7 small subunit (Vibrio parahaemolyticus serotype O3:K6 (strain RIMD 2210633)).